Consider the following 105-residue polypeptide: Protamine-2 (105 aa).

The disordered stretch occupies residues 1-74; that stretch reads MVRYRMRSPS…RRSCRRRRRH (74 aa). Serine 8, serine 10, and serine 33 each carry phosphoserine. Residues 33–42 show a composition bias toward basic and acidic residues; sequence SPERVEDYGR. Residues 43 to 74 show a composition bias toward basic residues; sequence THRGHHRHRRCSRKRLHRIHKRRRSCRRRRRH.

It belongs to the protamine P2 family. In terms of assembly, interacts with TDRP. Post-translationally, proteolytic processing into mature chains is required for histone eviction during spermatogenesis. Transition proteins (TNP1 and TNP2) are required for processing. Testis.

It is found in the nucleus. It localises to the chromosome. Its function is as follows. Protamines substitute for histones in the chromatin of sperm during the haploid phase of spermatogenesis. They compact sperm DNA into a highly condensed, stable and inactive complex. The polypeptide is Protamine-2 (Prm2) (Rattus fuscipes (Bush rat)).